Consider the following 350-residue polypeptide: MEDLVVELGERSYPIIIKKGLINEVNLEIQKVFKGKKIFILTDKNVGSHYGDRIKSCLIKSGYDVKLMELEPGEETKAFSTLPLIYNELLDFKITRSDLIITLGGGVIGDLGGFAASTFLRGVDFVQIPTSLLAQVDSSVGGKVAVDLERGKNLVGSFYHPKLVLIDPNVLETLSERFFRDGMAEVIKYGCIKDKEFFYFLKSLKNKEEVMNNIEKIIHKCCFIKKCVVENDEKDTGERMLLNFGHTLGHAIETYYNFKKFTHGEAVAIGMYEISKIAENKGLTDQGVSEEIREILVQYNLPYEVEIDDSSEVLDTIALDKKNIDNVLKVVLLRNIGESYLEKTNVEFFS.

Residues 106 to 110 (GVIGD), 130 to 131 (TS), Lys143, and Lys152 contribute to the NAD(+) site. Zn(2+) contacts are provided by Glu185, His246, and His263.

Belongs to the sugar phosphate cyclases superfamily. Dehydroquinate synthase family. It depends on Co(2+) as a cofactor. Zn(2+) is required as a cofactor. Requires NAD(+) as cofactor.

The protein localises to the cytoplasm. It catalyses the reaction 7-phospho-2-dehydro-3-deoxy-D-arabino-heptonate = 3-dehydroquinate + phosphate. Its pathway is metabolic intermediate biosynthesis; chorismate biosynthesis; chorismate from D-erythrose 4-phosphate and phosphoenolpyruvate: step 2/7. Catalyzes the conversion of 3-deoxy-D-arabino-heptulosonate 7-phosphate (DAHP) to dehydroquinate (DHQ). This Clostridium beijerinckii (strain ATCC 51743 / NCIMB 8052) (Clostridium acetobutylicum) protein is 3-dehydroquinate synthase.